The following is a 146-amino-acid chain: Hemoglobin subunit beta (146 aa).

Residue Val1 is modified to N-acetylvaline. The Globin domain maps to 2–146 (HLTAEEKNAI…VANALAHKYH (145 aa)). Thr12 is modified (phosphothreonine). Lys59 is modified (N6-acetyllysine). His63 is a heme b binding site. At Lys82 the chain carries N6-acetyllysine. Residue His92 coordinates heme b. Residue Cys93 is modified to S-nitrosocysteine. At Lys144 the chain carries N6-acetyllysine.

It belongs to the globin family. As to quaternary structure, heterotetramer of two alpha chains and two beta chains. As to expression, red blood cells.

Functionally, involved in oxygen transport from the lung to the various peripheral tissues. This Osphranter rufus (Red kangaroo) protein is Hemoglobin subunit beta (HBB).